The following is a 490-amino-acid chain: 2-succinylbenzoate--CoA ligase (490 aa).

It belongs to the ATP-dependent AMP-binding enzyme family. MenE subfamily.

It catalyses the reaction 2-succinylbenzoate + ATP + CoA = 2-succinylbenzoyl-CoA + AMP + diphosphate. It participates in quinol/quinone metabolism; 1,4-dihydroxy-2-naphthoate biosynthesis; 1,4-dihydroxy-2-naphthoate from chorismate: step 5/7. Its pathway is quinol/quinone metabolism; menaquinone biosynthesis. Converts 2-succinylbenzoate (OSB) to 2-succinylbenzoyl-CoA (OSB-CoA). The chain is 2-succinylbenzoate--CoA ligase from Geobacillus kaustophilus (strain HTA426).